The primary structure comprises 474 residues: PRAME family member 17 (474 aa).

An LRR 1; degenerate repeat occupies 97–124; that stretch reads RWKLQVLDLRDVDGNFWTIWSGARALSC. The stretch at 179 to 203 is one LRR 2; degenerate repeat; that stretch reads HLCCNKVQNYSMPTSSFRNLLKRVY. One copy of the LRR 3; degenerate repeat lies at 204–230; sequence PDSIQELEIKRKCSLNKTGKFAPYLSQ. An LRR 4; degenerate repeat occupies 231–265; sequence MSNLRKLFLAFGYDDELYVSGQQQFVPDLDCPFLC. 5 LRR repeats span residues 266–291, 292–323, 324–342, 348–375, and 376–400; these read LYYP…LRCL, KNPL…SQLK, ELHL…PLGA, AATL…ALSR, and CSQL…LLCH.

This sequence belongs to the PRAME family.

The protein is PRAME family member 17 of Homo sapiens (Human).